The sequence spans 106 residues: Small ribosomal subunit protein uS10 (106 aa).

The protein belongs to the universal ribosomal protein uS10 family. As to quaternary structure, part of the 30S ribosomal subunit.

Involved in the binding of tRNA to the ribosomes. The polypeptide is Small ribosomal subunit protein uS10 (Pyrobaculum arsenaticum (strain DSM 13514 / JCM 11321 / PZ6)).